Reading from the N-terminus, the 71-residue chain is Disintegrin ussuristatin-2 (71 aa).

A Disintegrin domain is found at Glu1–Phe71. Disulfide bonds link Cys6-Cys21, Cys8-Cys16, Cys15-Cys38, Cys29-Cys35, Cys34-Cys59, and Cys47-Cys66. Positions Lys51–Asp53 match the Cell attachment site; atypical (KGD) motif.

This sequence belongs to the venom metalloproteinase (M12B) family. P-II subfamily. P-IId sub-subfamily. As to quaternary structure, homodimer. In terms of tissue distribution, expressed by the venom gland.

The protein resides in the secreted. Functionally, suppress platelet aggregation induced by ADP, collagen, thrombin, and epinephrine (IC(50)=170-330 nM). Also dose-dependently inhibits the adhesion of human melanoma cells to fibrinogen but not to fibronectin. The sequence is that of Disintegrin ussuristatin-2 from Gloydius ussuriensis (Ussuri mamushi).